The following is a 92-amino-acid chain: MGRSLKKGPFVDDHLMKKIETLNESNDKKVVKTWSRRSTIFPEFVGHTIAVYDGRKHVPVYISEDMVGHKLGEFAPTRTYKGHAADDKKTRR.

It belongs to the universal ribosomal protein uS19 family.

Its function is as follows. Protein S19 forms a complex with S13 that binds strongly to the 16S ribosomal RNA. This Halalkalibacterium halodurans (strain ATCC BAA-125 / DSM 18197 / FERM 7344 / JCM 9153 / C-125) (Bacillus halodurans) protein is Small ribosomal subunit protein uS19 (rpsS).